The sequence spans 55 residues: MPQLNPHPWFAILVFSWIFFLVILPKKVMTHLFNNNPTAKSAEKPKPEPWNWPWT.

Residues 6 to 26 (PHPWFAILVFSWIFFLVILPK) traverse the membrane as a helical segment.

This sequence belongs to the ATPase protein 8 family. F-type ATPases have 2 components, CF(1) - the catalytic core - and CF(0) - the membrane proton channel.

It is found in the mitochondrion membrane. Functionally, mitochondrial membrane ATP synthase (F(1)F(0) ATP synthase or Complex V) produces ATP from ADP in the presence of a proton gradient across the membrane which is generated by electron transport complexes of the respiratory chain. F-type ATPases consist of two structural domains, F(1) - containing the extramembraneous catalytic core and F(0) - containing the membrane proton channel, linked together by a central stalk and a peripheral stalk. During catalysis, ATP synthesis in the catalytic domain of F(1) is coupled via a rotary mechanism of the central stalk subunits to proton translocation. Part of the complex F(0) domain. Minor subunit located with subunit a in the membrane. The sequence is that of ATP synthase protein 8 (MT-ATP8) from Squalus acanthias (Spiny dogfish).